The chain runs to 654 residues: Macrolide export ATP-binding/permease protein MacB (654 aa).

The ABC transporter domain occupies 6–244; it reads LKVEDLTRRF…EQAAKTPSAS (239 aa). 42-49 is a binding site for ATP; the sequence is GASGSGKS. A run of 4 helical transmembrane segments spans residues 280 to 300, 529 to 549, 584 to 604, and 619 to 639; these read FLTM…VALG, LLIS…VMNI, LVCL…GFAF, and SIIW…FLPA.

Belongs to the ABC transporter superfamily. Macrolide exporter (TC 3.A.1.122) family. Homodimer. Part of the tripartite efflux system MacAB-TolC, which is composed of an inner membrane transporter, MacB, a periplasmic membrane fusion protein, MacA, and an outer membrane component, TolC. The complex forms a large protein conduit and can translocate molecules across both the inner and outer membranes. Interacts with MacA.

The protein localises to the cell inner membrane. Functionally, part of the tripartite efflux system MacAB-TolC. MacB is a non-canonical ABC transporter that contains transmembrane domains (TMD), which form a pore in the inner membrane, and an ATP-binding domain (NBD), which is responsible for energy generation. Confers resistance against macrolides. This is Macrolide export ATP-binding/permease protein MacB from Vibrio parahaemolyticus serotype O3:K6 (strain RIMD 2210633).